Here is a 61-residue protein sequence, read N- to C-terminus: Sperm protamine P1 (61 aa).

Positions 1–61 (MARYRHSRSR…RRYSRRRRRY (61 aa)) are disordered.

This sequence belongs to the protamine P1 family. In terms of tissue distribution, testis.

The protein resides in the nucleus. Its subcellular location is the chromosome. Its function is as follows. Protamines substitute for histones in the chromatin of sperm during the haploid phase of spermatogenesis. They compact sperm DNA into a highly condensed, stable and inactive complex. This chain is Sperm protamine P1 (PRM1), found in Potorous longipes (Long-footed potoroo).